The sequence spans 269 residues: Tryptophan synthase alpha chain (269 aa).

Active-site proton acceptor residues include Glu49 and Asp60.

The protein belongs to the TrpA family. Tetramer of two alpha and two beta chains.

The catalysed reaction is (1S,2R)-1-C-(indol-3-yl)glycerol 3-phosphate + L-serine = D-glyceraldehyde 3-phosphate + L-tryptophan + H2O. Its pathway is amino-acid biosynthesis; L-tryptophan biosynthesis; L-tryptophan from chorismate: step 5/5. The alpha subunit is responsible for the aldol cleavage of indoleglycerol phosphate to indole and glyceraldehyde 3-phosphate. The protein is Tryptophan synthase alpha chain of Pseudomonas putida (Arthrobacter siderocapsulatus).